Consider the following 201-residue polypeptide: MSYVPIVIEQTSRGERAYDIYSRLLKERIIFVCSTVEDHMANLVVAQLLFLEAENPKKDIYMYINSPGGVVTAGLAIYDTMQYIKPKVATLCIGQACSMGSLLLCGGEKGMRYSLPHSRIMIHQPSGGYRGQATDIEIHAQETLKIKRLLNELYSKHTGQELKHIEKSMERDNFMSPEEAKKFGIIDNIISSRDAMTMSAK.

Serine 98 acts as the Nucleophile in catalysis. Residue histidine 123 is part of the active site.

It belongs to the peptidase S14 family. Fourteen ClpP subunits assemble into 2 heptameric rings which stack back to back to give a disk-like structure with a central cavity, resembling the structure of eukaryotic proteasomes.

The protein localises to the cytoplasm. The enzyme catalyses Hydrolysis of proteins to small peptides in the presence of ATP and magnesium. alpha-casein is the usual test substrate. In the absence of ATP, only oligopeptides shorter than five residues are hydrolyzed (such as succinyl-Leu-Tyr-|-NHMec, and Leu-Tyr-Leu-|-Tyr-Trp, in which cleavage of the -Tyr-|-Leu- and -Tyr-|-Trp bonds also occurs).. Cleaves peptides in various proteins in a process that requires ATP hydrolysis. Has a chymotrypsin-like activity. Plays a major role in the degradation of misfolded proteins. This Rickettsia felis (strain ATCC VR-1525 / URRWXCal2) (Rickettsia azadi) protein is ATP-dependent Clp protease proteolytic subunit.